Reading from the N-terminus, the 249-residue chain is Probable transcriptional regulatory protein Wbm0670 (249 aa).

It belongs to the TACO1 family.

The protein resides in the cytoplasm. The polypeptide is Probable transcriptional regulatory protein Wbm0670 (Wolbachia sp. subsp. Brugia malayi (strain TRS)).